The primary structure comprises 229 residues: Cytochrome c oxidase subunit 2 (229 aa).

The Mitochondrial intermembrane segment spans residues 1–26 (MSTWANLGLQDSASPLMEQLIFFHDH). The helical transmembrane segment at 27–48 (ALLILVMITVLVGYLMVMLFFN) threads the bilayer. Residues 49–62 (SYVNRFLLHGQLIE) are Mitochondrial matrix-facing. A helical transmembrane segment spans residues 63 to 82 (MIWTILPAIILLFIAMPSLR). The Mitochondrial intermembrane segment spans residues 83–229 (LLYLLDEINE…IKWISDKVNS (147 aa)). Residues His-161, Cys-196, Glu-198, Cys-200, His-204, and Met-207 each contribute to the Cu cation site. Glu-198 is a Mg(2+) binding site.

Belongs to the cytochrome c oxidase subunit 2 family. In terms of assembly, component of the cytochrome c oxidase (complex IV, CIV), a multisubunit enzyme composed of a catalytic core of 3 subunits and several supernumerary subunits. The complex exists as a monomer or a dimer and forms supercomplexes (SCs) in the inner mitochondrial membrane with ubiquinol-cytochrome c oxidoreductase (cytochrome b-c1 complex, complex III, CIII). Cu cation is required as a cofactor.

It localises to the mitochondrion inner membrane. It catalyses the reaction 4 Fe(II)-[cytochrome c] + O2 + 8 H(+)(in) = 4 Fe(III)-[cytochrome c] + 2 H2O + 4 H(+)(out). Component of the cytochrome c oxidase, the last enzyme in the mitochondrial electron transport chain which drives oxidative phosphorylation. The respiratory chain contains 3 multisubunit complexes succinate dehydrogenase (complex II, CII), ubiquinol-cytochrome c oxidoreductase (cytochrome b-c1 complex, complex III, CIII) and cytochrome c oxidase (complex IV, CIV), that cooperate to transfer electrons derived from NADH and succinate to molecular oxygen, creating an electrochemical gradient over the inner membrane that drives transmembrane transport and the ATP synthase. Cytochrome c oxidase is the component of the respiratory chain that catalyzes the reduction of oxygen to water. Electrons originating from reduced cytochrome c in the intermembrane space (IMS) are transferred via the dinuclear copper A center (CU(A)) of subunit 2 and heme A of subunit 1 to the active site in subunit 1, a binuclear center (BNC) formed by heme A3 and copper B (CU(B)). The BNC reduces molecular oxygen to 2 water molecules using 4 electrons from cytochrome c in the IMS and 4 protons from the mitochondrial matrix. The sequence is that of Cytochrome c oxidase subunit 2 (mt:CoII) from Drosophila subobscura (Fruit fly).